The primary structure comprises 408 residues: Ribosomal RNA large subunit methyltransferase DR_0049 (408 aa).

This sequence belongs to the methyltransferase superfamily.

It carries out the reaction cytidine(2499) in 23S rRNA + S-adenosyl-L-methionine = 5-methylcytidine(2499) in 23S rRNA + S-adenosyl-L-homocysteine + H(+). In terms of biological role, specifically methylates the cytosine at position 2499 (m5C2499) of 23S rRNA. This is Ribosomal RNA large subunit methyltransferase DR_0049 from Deinococcus radiodurans (strain ATCC 13939 / DSM 20539 / JCM 16871 / CCUG 27074 / LMG 4051 / NBRC 15346 / NCIMB 9279 / VKM B-1422 / R1).